A 201-amino-acid chain; its full sequence is 3-isopropylmalate dehydratase small subunit (201 aa).

Belongs to the LeuD family. LeuD type 1 subfamily. In terms of assembly, heterodimer of LeuC and LeuD.

The enzyme catalyses (2R,3S)-3-isopropylmalate = (2S)-2-isopropylmalate. It participates in amino-acid biosynthesis; L-leucine biosynthesis; L-leucine from 3-methyl-2-oxobutanoate: step 2/4. In terms of biological role, catalyzes the isomerization between 2-isopropylmalate and 3-isopropylmalate, via the formation of 2-isopropylmaleate. The sequence is that of 3-isopropylmalate dehydratase small subunit from Cereibacter sphaeroides (strain KD131 / KCTC 12085) (Rhodobacter sphaeroides).